We begin with the raw amino-acid sequence, 297 residues long: MAGPVRGAAGPWALDLLRALPRVSLANLRPNPGSRKPERRRRGQRRGRKCGRGHKGERQRGTRPRLGFEGGQTPFYLRIPKYGFNEGHSFRRQYQPLSLNRLQYLIDLGRVDPTQPIDLTQLVNGRGVTIQPSKRDYGVQLVEEGADTFKAKVNIEVQLASELAIAAIEKNGGVVTTAFYDPRSLEILCKPIPFFLRGQPIPKRMLPPEALVPYYTDARNRGYLADPARFPEARLELAKKYGYILPDITKDELFKMLSSRKDPRQIFFGLAPGWVVNMADKKILKPTDEKLLEYYSS.

The transit peptide at 1–22 (MAGPVRGAAGPWALDLLRALPR) directs the protein to the mitochondrion. Residues 27–68 (NLRPNPGSRKPERRRRGQRRGRKCGRGHKGERQRGTRPRLGF) are disordered. Residues 37-53 (PERRRRGQRRGRKCGRG) show a composition bias toward basic residues.

Belongs to the universal ribosomal protein uL15 family. In terms of assembly, component of the mitochondrial ribosome large subunit (39S) which comprises a 16S rRNA and about 50 distinct proteins.

The protein resides in the mitochondrion. This is Large ribosomal subunit protein uL15m (MRPL15) from Bos taurus (Bovine).